The following is a 290-amino-acid chain: MKDYTLIALAYNQEIRIYTSVSTNLVEKSRKLHKTLPTASAAMGRFLTASAMMSLMYKDGERLTLKIDGDGPIGQMTVEAKNGVVRSTILNPNVYLVYGEGPKMGKLNVGAAVGAGTLSVTKDWKENYFTSSSPLQTGEIGDDFTYYYATSEQTPSAVGLGVLVSRGKKVIQAGGFIIQVLPHASEKTLNQLESIISKINSVTDLLKSNHTPEDMINILSDNTGEILEKHELKYHCGCSRKKYFDALSRLNKQALEDILHEDGQAEVVCQYCNKKYIYTSEDLTKMIASK.

Intrachain disulfides connect Cys-236/Cys-238 and Cys-269/Cys-272.

Belongs to the HSP33 family. In terms of processing, under oxidizing conditions two disulfide bonds are formed involving the reactive cysteines. Under reducing conditions zinc is bound to the reactive cysteines and the protein is inactive.

It is found in the cytoplasm. Functionally, redox regulated molecular chaperone. Protects both thermally unfolding and oxidatively damaged proteins from irreversible aggregation. Plays an important role in the bacterial defense system toward oxidative stress. This Acholeplasma laidlawii (strain PG-8A) protein is 33 kDa chaperonin.